Consider the following 294-residue polypeptide: tRNA pseudouridine synthase B (294 aa).

The active-site Nucleophile is Asp38.

This sequence belongs to the pseudouridine synthase TruB family. Type 1 subfamily.

The enzyme catalyses uridine(55) in tRNA = pseudouridine(55) in tRNA. Its function is as follows. Responsible for synthesis of pseudouridine from uracil-55 in the psi GC loop of transfer RNAs. This Clostridium perfringens (strain ATCC 13124 / DSM 756 / JCM 1290 / NCIMB 6125 / NCTC 8237 / Type A) protein is tRNA pseudouridine synthase B.